A 92-amino-acid polypeptide reads, in one-letter code: Small ribosomal subunit protein bS18 (92 aa).

It belongs to the bacterial ribosomal protein bS18 family. Part of the 30S ribosomal subunit. Forms a tight heterodimer with protein bS6.

Functionally, binds as a heterodimer with protein bS6 to the central domain of the 16S rRNA, where it helps stabilize the platform of the 30S subunit. The polypeptide is Small ribosomal subunit protein bS18 (Pelagibacter ubique (strain HTCC1062)).